The primary structure comprises 515 residues: UPF0053 protein BUsg_314 (515 aa).

The next 7 membrane-spanning stretches (helical) occupy residues 14 to 34 (LTLVVLEVVLGIDNLIFVAIL), 49 to 69 (IGLGLALIMRLALLSLISWVV), 79 to 99 (NFFSLSIRDLILLIGGLFLLF), 125 to 145 (FWAVVIQIVVLDAVFSLDAII), 150 to 170 (MVNQLLIMMIAVVLATILMLL), 185 to 205 (VVVLCLSFLLMIGFSLVAEAL), and 207 to 227 (FYIPKGYLYAAIGFSILIEIF). CBS domains follow at residues 309–368 (MTPR…NIDV) and 372–432 (ASQI…DADE).

The protein belongs to the UPF0053 family.

The protein localises to the cell membrane. This Buchnera aphidicola subsp. Schizaphis graminum (strain Sg) protein is UPF0053 protein BUsg_314.